We begin with the raw amino-acid sequence, 681 residues long: DNA ligase (681 aa).

NAD(+)-binding positions include 34-38 (DAEYD), 83-84 (SL), and glutamate 115. Catalysis depends on lysine 117, which acts as the N6-AMP-lysine intermediate. The NAD(+) site is built by arginine 138, glutamate 185, lysine 301, and lysine 325. Residues cysteine 419, cysteine 422, cysteine 437, and cysteine 443 each contribute to the Zn(2+) site. Positions 602-681 (RKSDVLAGQT…AALLALIGER (80 aa)) constitute a BRCT domain.

It belongs to the NAD-dependent DNA ligase family. LigA subfamily. Mg(2+) serves as cofactor. Requires Mn(2+) as cofactor.

The catalysed reaction is NAD(+) + (deoxyribonucleotide)n-3'-hydroxyl + 5'-phospho-(deoxyribonucleotide)m = (deoxyribonucleotide)n+m + AMP + beta-nicotinamide D-nucleotide.. In terms of biological role, DNA ligase that catalyzes the formation of phosphodiester linkages between 5'-phosphoryl and 3'-hydroxyl groups in double-stranded DNA using NAD as a coenzyme and as the energy source for the reaction. It is essential for DNA replication and repair of damaged DNA. The protein is DNA ligase of Chloroflexus aggregans (strain MD-66 / DSM 9485).